The following is a 732-amino-acid chain: Elongation factor 2 (732 aa).

Residues 19-230 enclose the tr-type G domain; it reads ERIRNMGIAA…VSFKDIIDLT (212 aa). GTP-binding positions include 28–35, 94–98, and 148–151; these read AHIDHGKT, DTPGH, and NKVD. His597 is modified (diphthamide).

It belongs to the TRAFAC class translation factor GTPase superfamily. Classic translation factor GTPase family. EF-G/EF-2 subfamily.

The protein resides in the cytoplasm. Functionally, catalyzes the GTP-dependent ribosomal translocation step during translation elongation. During this step, the ribosome changes from the pre-translocational (PRE) to the post-translocational (POST) state as the newly formed A-site-bound peptidyl-tRNA and P-site-bound deacylated tRNA move to the P and E sites, respectively. Catalyzes the coordinated movement of the two tRNA molecules, the mRNA and conformational changes in the ribosome. This chain is Elongation factor 2, found in Thermococcus sibiricus (strain DSM 12597 / MM 739).